Consider the following 264-residue polypeptide: Carbohydrate deacetylase (264 aa).

Asp-20 acts as the Proton acceptor in catalysis. Residues Asp-21, His-60, and His-127 each contribute to the Mg(2+) site. Catalysis depends on His-215, which acts as the Proton donor.

The protein belongs to the YdjC deacetylase family. As to quaternary structure, homodimer. Mg(2+) serves as cofactor.

In terms of biological role, probably catalyzes the deacetylation of acetylated carbohydrates an important step in the degradation of oligosaccharides. This is Carbohydrate deacetylase from Thermus thermophilus (strain ATCC 27634 / DSM 579 / HB8).